A 98-amino-acid polypeptide reads, in one-letter code: Integration host factor subunit alpha (98 aa).

The tract at residues 54 to 74 (LRDKASRPGRNPKTGENIPVS) is disordered.

It belongs to the bacterial histone-like protein family. In terms of assembly, heterodimer of an alpha and a beta chain.

Its function is as follows. This protein is one of the two subunits of integration host factor, a specific DNA-binding protein that functions in genetic recombination as well as in transcriptional and translational control. The chain is Integration host factor subunit alpha from Actinobacillus succinogenes (strain ATCC 55618 / DSM 22257 / CCUG 43843 / 130Z).